Here is a 238-residue protein sequence, read N- to C-terminus: B-box zinc finger protein 25 (238 aa).

The Zn(2+) site is built by Cys-5, Cys-8, Cys-28, His-33, Cys-57, Cys-60, Cys-80, and His-85. Residues 5–47 form a B box-type 1; atypical zinc finger; that stretch reads CDVCEKAPATLICCADEAALCAKCDVEVHAANKLASKHQRLFL. The segment at 57 to 99 adopts a B box-type 2; atypical zinc-finger fold; the sequence is CDICLEKAAFIFCVEDRALLCRDCDEATHAPNTRSANHQRFLA. Positions 115-139 are disordered; that stretch reads VEKNHFDPSNQQSLSKPPTQQPAAP. The span at 121-137 shows a compositional bias: polar residues; the sequence is DPSNQQSLSKPPTQQPA. The segment at 226–238 is interaction with COP1; sequence DDEEEHFLVPDLG.

Interacts with COP1 WD40 domain. Interacts with HY5 and HYH. COP1-mediated ubiquitination and subsequent proteasomal degradation of BBX25/STH occurs in the dark.

The protein resides in the nucleus. In terms of biological role, acts as a negative regulator of seedling photomorphogenesis. BBX25/STH and BBX24/STO function as transcriptional corepressors of HY5 activity, leading to the down-regulation of BBX22 expression. BBX25/STH acts additively with BBX24/STO during de-etiolation and the hypocotyl shade avoidance response. The chain is B-box zinc finger protein 25 from Arabidopsis thaliana (Mouse-ear cress).